Consider the following 95-residue polypeptide: Putative pterin-4-alpha-carbinolamine dehydratase (95 aa).

It belongs to the pterin-4-alpha-carbinolamine dehydratase family.

It catalyses the reaction (4aS,6R)-4a-hydroxy-L-erythro-5,6,7,8-tetrahydrobiopterin = (6R)-L-erythro-6,7-dihydrobiopterin + H2O. The protein is Putative pterin-4-alpha-carbinolamine dehydratase of Nocardia farcinica (strain IFM 10152).